We begin with the raw amino-acid sequence, 347 residues long: NADH-ubiquinone oxidoreductase chain 2 (347 aa).

9 helical membrane passes run 1–21 (MNPF…MIVM), 59–79 (YFMT…INLL), 93–115 (TASM…HFWV), 149–169 (INPN…GWGG), 178–198 (IMAY…IYNP), 201–221 (TILN…MFAL), 239–259 (IITT…PLTG), 274–294 (DSII…YFYM), and 325–345 (LLPT…MLVV).

Belongs to the complex I subunit 2 family. As to quaternary structure, core subunit of respiratory chain NADH dehydrogenase (Complex I) which is composed of 45 different subunits. Interacts with TMEM242.

The protein localises to the mitochondrion inner membrane. The catalysed reaction is a ubiquinone + NADH + 5 H(+)(in) = a ubiquinol + NAD(+) + 4 H(+)(out). Functionally, core subunit of the mitochondrial membrane respiratory chain NADH dehydrogenase (Complex I) which catalyzes electron transfer from NADH through the respiratory chain, using ubiquinone as an electron acceptor. Essential for the catalytic activity and assembly of complex I. The protein is NADH-ubiquinone oxidoreductase chain 2 of Hippopotamus amphibius (Hippopotamus).